The primary structure comprises 238 residues: tRNA (guanine-N(7)-)-methyltransferase (238 aa).

Glu-68, Glu-93, Asp-120, and Asp-143 together coordinate S-adenosyl-L-methionine. The active site involves Asp-143. Substrate is bound by residues Lys-147, Asp-179, and 216 to 219 (TKFE).

Belongs to the class I-like SAM-binding methyltransferase superfamily. TrmB family.

The enzyme catalyses guanosine(46) in tRNA + S-adenosyl-L-methionine = N(7)-methylguanosine(46) in tRNA + S-adenosyl-L-homocysteine. The protein operates within tRNA modification; N(7)-methylguanine-tRNA biosynthesis. Functionally, catalyzes the formation of N(7)-methylguanine at position 46 (m7G46) in tRNA. The chain is tRNA (guanine-N(7)-)-methyltransferase from Shewanella sp. (strain W3-18-1).